A 465-amino-acid chain; its full sequence is ATP synthase subunit beta (465 aa).

152–159 (GGAGVGKT) is an ATP binding site.

It belongs to the ATPase alpha/beta chains family. As to quaternary structure, F-type ATPases have 2 components, CF(1) - the catalytic core - and CF(0) - the membrane proton channel. CF(1) has five subunits: alpha(3), beta(3), gamma(1), delta(1), epsilon(1). CF(0) has three main subunits: a(1), b(2) and c(9-12). The alpha and beta chains form an alternating ring which encloses part of the gamma chain. CF(1) is attached to CF(0) by a central stalk formed by the gamma and epsilon chains, while a peripheral stalk is formed by the delta and b chains.

Its subcellular location is the cell inner membrane. The catalysed reaction is ATP + H2O + 4 H(+)(in) = ADP + phosphate + 5 H(+)(out). Functionally, produces ATP from ADP in the presence of a proton gradient across the membrane. The catalytic sites are hosted primarily by the beta subunits. This chain is ATP synthase subunit beta, found in Campylobacter concisus (strain 13826).